We begin with the raw amino-acid sequence, 707 residues long: Terpene cyclase/mutase atnI (707 aa).

Over residues 1–20 (MGQHIASSESSTNGHVSLET) the composition is skewed to polar residues. The segment at 1-22 (MGQHIASSESSTNGHVSLETNG) is disordered. 4 PFTB repeats span residues 130–173 (AVEI…RLLG), 494–535 (LRDA…VGKT), 571–608 (TAQGLGFIKQSQKPDGGWYGAWGVCFTYAGMFALETLA), and 620–661 (SRRG…VQTA).

This sequence belongs to the terpene cyclase/mutase family.

It participates in secondary metabolite biosynthesis; terpenoid biosynthesis. Functionally, terpene cyclase/mutase; part of the gene cluster that mediates the biosynthesis of the meroterpenoids arthripenoids. The pathway begins with the HR-PKS atnH that catalyzes two chain-extension steps to form a reduced triketide, which then primes the SAT domain in the NR-PKS atnG to initiate three more cycles of extension to give a linear hexaketide corresponding to the polyketide part of arthripenoids. The FAD-dependent monooxygenase atnJ then performs an oxidative decarboxylation at C11 of the atnH/atnG product, via an electrophilic aromatic hydroxylation with concomitant ipso-decarboxylation. The membrane-bound polyprenyl transferase atnF then introduces a farnesyl group before the FAD-dependent monooxygenase atnK functions as the first epoxidase on terminal C12'-C13' olefin, followed by a second epoxidation on C7'-C8' catalyzed by atnA. The terpene cyclase/mutase atnI then initiates the sequential tricyclic ring formation through protonation of the terminal epoxide and catalyzes the regioselective and stereoselective 6/6/6-tricyclic ring formation. The cytochrome P450 monooxygenase atnM is responsible for hydroxylating both C1' and C10'. The next steps may involve ketoreduction and acetyl transfer by the ketoreductase atnB and the acetyltransferase atnC, and lead to the production of arthripenoid B, the final biosynthetic product of the atn cluster. The hydroquinone moiety in arthripenoid B is prone to undergo spontaneous oxidation to afford a benzoquinone compound, a key intermediate for generating structure diversity. For instance, addition of a cysteine followed by ring contraction gives arthripenoid A, tautomerization gives the main product arthripenoid C, addition of a molecular of water or amine affords arthripenoid D or E, respectively, and loss of one water forms arthripenoid F. The chain is Terpene cyclase/mutase atnI from Arthrinium sp.